The primary structure comprises 142 residues: Gonadotropin subunit beta-2 (142 aa).

A signal peptide spans 1–23 (MLGLHVGTLISLFLCILLEPIEG). Cystine bridges form between Cys-29-Cys-77, Cys-43-Cys-92, Cys-46-Cys-130, Cys-54-Cys-108, Cys-58-Cys-110, and Cys-113-Cys-120. Asn-33 carries N-linked (GlcNAc...) asparagine glycosylation.

It belongs to the glycoprotein hormones subunit beta family. In terms of assembly, heterodimer of an alpha and a beta chain.

It localises to the secreted. Involved in gametogenesis and steroidogenesis. The chain is Gonadotropin subunit beta-2 (cgbb) from Oncorhynchus tshawytscha (Chinook salmon).